Consider the following 156-residue polypeptide: Transcription antitermination protein NusB (156 aa).

The protein belongs to the NusB family.

Functionally, involved in transcription antitermination. Required for transcription of ribosomal RNA (rRNA) genes. Binds specifically to the boxA antiterminator sequence of the ribosomal RNA (rrn) operons. The polypeptide is Transcription antitermination protein NusB (Vibrio cholerae serotype O1 (strain ATCC 39541 / Classical Ogawa 395 / O395)).